Consider the following 85-residue polypeptide: Polcalcin Bet v 4 (85 aa).

2 consecutive EF-hand domains span residues 7–42 and 42–77; these read QDKA…LGSI and ITPD…NRGL. Positions 20, 22, 24, 26, 31, 55, 57, 59, and 66 each coordinate Ca(2+).

As to quaternary structure, monomer.

The protein is Polcalcin Bet v 4 (BETV4) of Betula pendula (European white birch).